The following is a 147-amino-acid chain: Large ribosomal subunit protein bL9 (147 aa).

The protein belongs to the bacterial ribosomal protein bL9 family.

In terms of biological role, binds to the 23S rRNA. The polypeptide is Large ribosomal subunit protein bL9 (Clostridium novyi (strain NT)).